The chain runs to 105 residues: Large ribosomal subunit protein bL21 (105 aa).

It belongs to the bacterial ribosomal protein bL21 family. As to quaternary structure, part of the 50S ribosomal subunit. Contacts protein L20.

Its function is as follows. This protein binds to 23S rRNA in the presence of protein L20. This is Large ribosomal subunit protein bL21 from Parabacteroides distasonis (strain ATCC 8503 / DSM 20701 / CIP 104284 / JCM 5825 / NCTC 11152).